The chain runs to 1513 residues: DNA topoisomerase 2-binding protein 1-A (1513 aa).

BRCT domains follow at residues 101–189 (VYNM…YSDV) and 194–283 (YLCP…MYKI). Residues 289 to 308 (IKSVPDTSTPTGGNSKPNSR) form a disordered region. BRCT domains are found at residues 354-444 (APDD…IYFH), 530-621 (ADTS…SNAL), and 629-726 (EGST…SYLV). Residues 789 to 799 (QHNKNPQTSGG) show a composition bias toward polar residues. The segment at 789–809 (QHNKNPQTSGGESKVLQREPS) is disordered. Residues 844–850 (PNQKNRT) carry the Nuclear localization signal motif. In terms of domain architecture, BRCT 6 spans 892-984 (DNSKLLINVV…KRVPEALYPH (93 aa)). 2 disordered regions span residues 1031 to 1053 (ETSDDQVKKAAGDGNPQNPSKDV) and 1086 to 1109 (SVGRAGFDNSPCTPEGARSTRNGR). Serine 1131 is modified (phosphoserine). BRCT domains are found at residues 1253–1344 (SKEE…DYEW) and 1383–1480 (IAEG…NYCL). A Nuclear localization signal motif is present at residues 1508-1511 (KRSR).

It belongs to the TOPBP1 family. In terms of assembly, interacts with cdc45. Interacts (via BRCT domains) with ticrr; interaction is cdk2-dependent. Interacts with atr in the presence of atrip. Interacts with recql4 (via N-terminus). Interacts with gmnc. Interacts with cip2a; forming the CIP2A-TOPBP1 complex. Post-translationally, phosphorylation at Ser-1131 is essential for phosphorylation of chek1, and thus for checkpoint regulation.

It is found in the nucleus. The protein resides in the chromosome. The protein localises to the cytoplasm. Its subcellular location is the cytoskeleton. It localises to the microtubule organizing center. It is found in the centrosome. The protein resides in the spindle pole. Scaffold protein that acts as a key protein-protein adapter in DNA replication and DNA repair. Composed of multiple BRCT domains, which specifically recognize and bind phosphorylated proteins, bringing proteins together into functional combinations. Required for DNA replication initiation but not for the formation of pre-replicative complexes or the elongation stages. Necessary for the loading of replication factors onto chromatin, including gmnc, cdc45, DNA polymerases and components of the GINS complex such as ginsl/sld5. Plays a central role in DNA repair by bridging proteins and promoting recruitment of proteins to DNA damage sites. Involved in double-strand break (DSB) repair via homologous recombination in S-phase by promoting the exchange between the DNA replication factor A (RPA) complex and RAD51. Involved in microhomology-mediated end-joining (MMEJ) DNA repair by promoting recruitment of polymerase theta (POLQ) to DNA damage sites during mitosis. In response to DNA damage, triggers the recruitment of checkpoint signaling proteins on chromatin, which activate the chek1 signaling pathway and block S-phase progression. Increases the kinase activity of atr to numerous substrates, and is required for the phosphorylation of Rad1. Together with cip2a, plays an essential role in the response to genome instability generated by the presence of acentric chromosome fragments derived from shattered chromosomes within micronuclei. The CIP2A-TOPBP1 complex tethers chromosome fragments during mitosis to ensure clustered segregation of the fragments to a single daughter cell nucleus, facilitating re-ligation with limited chromosome scattering and loss. The protein is DNA topoisomerase 2-binding protein 1-A (topbp1-A) of Xenopus laevis (African clawed frog).